A 378-amino-acid chain; its full sequence is Probable pectin lyase A (378 aa).

A signal peptide spans 1-18; that stretch reads MKYASFLALVGFITSTSA. Disulfide bonds link Cys81/Cys100 and Cys90/Cys224. Arg254 is an active-site residue. The cysteines at positions 321 and 329 are disulfide-linked.

Belongs to the polysaccharide lyase 1 family.

Its subcellular location is the secreted. It carries out the reaction Eliminative cleavage of (1-&gt;4)-alpha-D-galacturonan methyl ester to give oligosaccharides with 4-deoxy-6-O-methyl-alpha-D-galact-4-enuronosyl groups at their non-reducing ends.. Functionally, pectinolytic enzymes consist of four classes of enzymes: pectin lyase, polygalacturonase, pectin methylesterase and rhamnogalacturonase. Among pectinolytic enzymes, pectin lyase is the most important in depolymerization of pectin, since it cleaves internal glycosidic bonds of highly methylated pectins. This Aspergillus clavatus (strain ATCC 1007 / CBS 513.65 / DSM 816 / NCTC 3887 / NRRL 1 / QM 1276 / 107) protein is Probable pectin lyase A (pelA).